A 116-amino-acid chain; its full sequence is Large ribosomal subunit protein uL18 (116 aa).

Belongs to the universal ribosomal protein uL18 family. Part of the 50S ribosomal subunit; part of the 5S rRNA/L5/L18/L25 subcomplex. Contacts the 5S and 23S rRNAs.

In terms of biological role, this is one of the proteins that bind and probably mediate the attachment of the 5S RNA into the large ribosomal subunit, where it forms part of the central protuberance. In Novosphingobium aromaticivorans (strain ATCC 700278 / DSM 12444 / CCUG 56034 / CIP 105152 / NBRC 16084 / F199), this protein is Large ribosomal subunit protein uL18.